The chain runs to 1343 residues: DNA-directed RNA polymerase subunit beta (1343 aa).

Belongs to the RNA polymerase beta chain family. In terms of assembly, the RNAP catalytic core consists of 2 alpha, 1 beta, 1 beta' and 1 omega subunit. When a sigma factor is associated with the core the holoenzyme is formed, which can initiate transcription.

The enzyme catalyses RNA(n) + a ribonucleoside 5'-triphosphate = RNA(n+1) + diphosphate. Functionally, DNA-dependent RNA polymerase catalyzes the transcription of DNA into RNA using the four ribonucleoside triphosphates as substrates. The chain is DNA-directed RNA polymerase subunit beta from Shewanella woodyi (strain ATCC 51908 / MS32).